The chain runs to 467 residues: MAP kinase-interacting serine/threonine-protein kinase 2 (467 aa).

Residues 83–367 enclose the Protein kinase domain; that stretch reads QLQQEILGEG…AAQVLQHPWV (285 aa). Residues 89-97 and K112 each bind ATP; that span reads LGEGAYAKV. D204 acts as the Proton acceptor in catalysis. Zn(2+) contacts are provided by C298, C310, and C313. A disordered region spans residues 432–467; the sequence is MQLSPPSESKLAKRRQQGSKGGISPPSLAPLLIVSD.

This sequence belongs to the protein kinase superfamily. CAMK Ser/Thr protein kinase family. Requires Mg(2+) as cofactor. The cofactor is Zn(2+).

The enzyme catalyses L-seryl-[protein] + ATP = O-phospho-L-seryl-[protein] + ADP + H(+). It carries out the reaction L-threonyl-[protein] + ATP = O-phospho-L-threonyl-[protein] + ADP + H(+). In terms of biological role, may play a role in the response to environmental stress and cytokines. Appears to regulate translation by phosphorylating EIF4E, thus increasing the affinity of this protein for the 7-methylguanosine-containing mRNA cap. This chain is MAP kinase-interacting serine/threonine-protein kinase 2 (mknk2), found in Xenopus laevis (African clawed frog).